A 221-amino-acid chain; its full sequence is Ribosomal RNA small subunit methyltransferase G (221 aa).

Gly78, Phe83, and Arg150 together coordinate S-adenosyl-L-methionine.

This sequence belongs to the methyltransferase superfamily. RNA methyltransferase RsmG family.

The protein resides in the cytoplasm. Functionally, specifically methylates the N7 position of a guanine in 16S rRNA. The polypeptide is Ribosomal RNA small subunit methyltransferase G (Bifidobacterium longum (strain DJO10A)).